The chain runs to 306 residues: UPF0282 protein Pars_1056 (306 aa).

This sequence belongs to the UPF0282 family.

This chain is UPF0282 protein Pars_1056, found in Pyrobaculum arsenaticum (strain DSM 13514 / JCM 11321 / PZ6).